Reading from the N-terminus, the 308-residue chain is D-alanine--D-alanine ligase (308 aa).

One can recognise an ATP-grasp domain in the interval 104–301 (KQIWQGSDLP…FDELCVAILE (198 aa)). 130–185 (IAELGLPVIIKPVHEGSSVGMSKVEKAEDFAAAIEKATQHDAVVMAEKWITGREFT) serves as a coordination point for ATP. Residues aspartate 255, glutamate 268, and asparagine 270 each coordinate Mg(2+).

The protein belongs to the D-alanine--D-alanine ligase family. The cofactor is Mg(2+). It depends on Mn(2+) as a cofactor.

The protein localises to the cytoplasm. The catalysed reaction is 2 D-alanine + ATP = D-alanyl-D-alanine + ADP + phosphate + H(+). The protein operates within cell wall biogenesis; peptidoglycan biosynthesis. In terms of biological role, cell wall formation. The polypeptide is D-alanine--D-alanine ligase (Acinetobacter baumannii (strain ACICU)).